The chain runs to 320 residues: Ino eighty subunit 2 (320 aa).

2 stretches are compositionally biased toward acidic residues: residues 1–12 (MDSEASDIEAEL) and 22–35 (EYIDDDDYTEDIDD). Disordered stretches follow at residues 1 to 232 (MDSE…SKKK) and 244 to 306 (ENAR…EGMT). The segment covering 42–59 (SSRRTARRSVPKGVRTSK) has biased composition (basic residues). Phosphoserine is present on serine 67. The segment covering 68-80 (VEVDEDYDEEEDV) has biased composition (acidic residues). A compositionally biased stretch (basic and acidic residues) spans 105–116 (EKSDIGDSKGND). Over residues 117 to 130 (GEIEDGILEEEESL) the composition is skewed to acidic residues. Serine 129 is modified (phosphoserine). The span at 131-147 (EKELNRGGGKEVEKSEE) shows a compositional bias: basic and acidic residues. A compositionally biased stretch (acidic residues) spans 161–174 (EEQDGESGGYEDNE). Over residues 207 to 217 (TDSTRSTTTRS) the composition is skewed to low complexity. Residues 244 to 264 (ENARKRKNLSEKRLEEEKQDT) show a composition bias toward basic and acidic residues. Positions 268–278 (LLKKRAGKSRS) are enriched in basic residues.

This sequence belongs to the IES2 family. As to quaternary structure, component of the chromatin-remodeling INO80 complex, at least composed of ARP4, ARP5, ARP8, RVB1, RVB2, TAF14, NHP10, IES1, IES3, IES4, IES6, ACT1, IES2, IES5 and INO80.

The protein resides in the nucleus. Component of the INO80 complex which remodels chromatin by shifting nucleosomes and is involved in DNA repair. The protein is Ino eighty subunit 2 (IES2) of Saccharomyces cerevisiae (strain ATCC 204508 / S288c) (Baker's yeast).